We begin with the raw amino-acid sequence, 370 residues long: Protein-glutamate methylesterase/protein-glutamine glutaminase of group 1 operon (370 aa).

Positions 4-121 (KVLVVDDSGF…SRNPDKVKQL (118 aa)) constitute a Response regulatory domain. At aspartate 55 the chain carries 4-aspartylphosphate. The segment covering 150–180 (PASTFTSQAQTRPAAPARAAAPTPAASQSPA) has biased composition (low complexity). Positions 150–183 (PASTFTSQAQTRPAAPARAAAPTPAASQSPAPKR) are disordered. The region spanning 179–370 (PAPKRKPYKL…IGKHLVEACV (192 aa)) is the CheB-type methylesterase domain. Residues serine 194, histidine 221, and aspartate 314 contribute to the active site.

Belongs to the CheB family. In terms of processing, phosphorylated by CheA. Phosphorylation of the N-terminal regulatory domain activates the methylesterase activity.

It localises to the cytoplasm. It carries out the reaction [protein]-L-glutamate 5-O-methyl ester + H2O = L-glutamyl-[protein] + methanol + H(+). The enzyme catalyses L-glutaminyl-[protein] + H2O = L-glutamyl-[protein] + NH4(+). Its function is as follows. Involved in chemotaxis. Part of a chemotaxis signal transduction system that modulates chemotaxis in response to various stimuli. Catalyzes the demethylation of specific methylglutamate residues introduced into the chemoreceptors (methyl-accepting chemotaxis proteins or MCP) by CheR. Also mediates the irreversible deamidation of specific glutamine residues to glutamic acid. This is Protein-glutamate methylesterase/protein-glutamine glutaminase of group 1 operon from Pseudomonas putida (strain ATCC 47054 / DSM 6125 / CFBP 8728 / NCIMB 11950 / KT2440).